The sequence spans 808 residues: MANAERVITRVHSQRERLDATLVAQKNEVFALLSRVEAKGKGILQHHQIIAEFEAMPLETQKKLKGGAFFEFLRSAQEAIVLPPFVALAVRPRPGVWEYVRVNLHDLVVEELQASEYLQFKEELVDGIKNGNFTLELDFEPFNAAFPRPTLNKYIGDGVEFLNRHLSAKLFHDKESLHPLLKFLRLHSHEGKTLMLNNRIQNLNTLQHNLRKAEEYLMELKPETLYSEFEHKFQEIGLERGWGDTAERVLNMIRLLLDLLEAPDPCTLENFLGRIPMVFNVVILSPHGYFAQDNVLGYPDTGGQVVYILDQVRALETEMLQRIKQQGLNITPRILIITRLLPDAAGTTCGQRLEKVYGSQYCDILRVPFRTEKGIVRKWISRFEVWPYLETFTEDVAAEISKELQGKPDLIIGNYSDGNLVASLLAHKLGVTQCTIAHALEKTKYPDSDIYWKKLDEKYHFSCQFTADLIAMNHTDFIITSTFQEIAGSKDTVGQYESHRSFTLPGLYRVVHGIDVFDPKFNIVSPGADMSIYFAYTEEKRRLTAFHLEIEELLYSDVENEEHLCVLKDKKKPIIFTMARLDRVKNLSGLVEWYGKNTRLRELVNLVVVGGDRRKESQDNEEKAEMKKMYELIEEYKLNGQFRWISSQMNRVRNGELYRYICDTKGAFVQPALYEAFGLTVVEAMTCGLPTFATCNGGPAEIIVHGKSGFHIDPYHGDKAAESLADFFTKCKHDPSHWDQISLGGLERIQEKYTWQIYSQRLLTLTGVYGFWKHVSNLDRLESRRYLEMFYALKYRPLAQAVPLAHEE.

Positions 277–754 are GT-B glycosyltransferase; that stretch reads MVFNVVILSP…GLERIQEKYT (478 aa).

Belongs to the glycosyltransferase 1 family. Plant sucrose synthase subfamily. In terms of tissue distribution, detected in the whole plant with highest expression in young rosette leaves and roots.

It carries out the reaction an NDP-alpha-D-glucose + D-fructose = a ribonucleoside 5'-diphosphate + sucrose + H(+). Sucrose-cleaving enzyme that provides UDP-glucose and fructose for various metabolic pathways. The polypeptide is Sucrose synthase 4 (SUS4) (Arabidopsis thaliana (Mouse-ear cress)).